The primary structure comprises 319 residues: Ribonuclease Z (319 aa).

Residues His62, His64, Asp66, His67, His145, Asp215, and His273 each contribute to the Zn(2+) site. Residue Asp66 is the Proton acceptor of the active site.

The protein belongs to the RNase Z family. As to quaternary structure, homodimer. Zn(2+) serves as cofactor.

The catalysed reaction is Endonucleolytic cleavage of RNA, removing extra 3' nucleotides from tRNA precursor, generating 3' termini of tRNAs. A 3'-hydroxy group is left at the tRNA terminus and a 5'-phosphoryl group is left at the trailer molecule.. Functionally, zinc phosphodiesterase, which displays some tRNA 3'-processing endonuclease activity. Probably involved in tRNA maturation, by removing a 3'-trailer from precursor tRNA. In Borrelia hermsii (strain HS1 / DAH), this protein is Ribonuclease Z.